Here is a 126-residue protein sequence, read N- to C-terminus: Profilin (126 aa).

It belongs to the profilin family. In terms of assembly, occurs in many kinds of cells as a complex with monomeric actin in a 1:1 ratio.

It is found in the cytoplasm. Its subcellular location is the cytoskeleton. Its function is as follows. Binds to actin and affects the structure of the cytoskeleton. At high concentrations, profilin prevents the polymerization of actin, whereas it enhances it at low concentrations. By binding to PIP2, it inhibits the formation of IP3 and DG. The polypeptide is Profilin (Branchiostoma belcheri (Amphioxus)).